The primary structure comprises 328 residues: N-acyl-aromatic-L-amino acid amidohydrolase (carboxylate-forming) A (328 aa).

Residues histidine 30 and glutamate 33 each coordinate Zn(2+). Substrate-binding positions include arginine 74 and 81-82; that span reads NR. Residue histidine 127 coordinates Zn(2+). Substrate is bound by residues glutamate 189 and tyrosine 300.

The protein belongs to the AspA/AstE family. Aspartoacylase subfamily. In terms of assembly, homotetramer. Zn(2+) is required as a cofactor.

It localises to the apical cell membrane. The protein resides in the cytoplasm. It carries out the reaction an N-acyl-aromatic L-alpha-amino acid + H2O = an aromatic L-alpha-amino acid + a carboxylate. The enzyme catalyses an N-acetyl-L-cysteine-S-conjugate + H2O = an S-substituted L-cysteine + acetate. Functionally, plays an important role in deacetylating mercapturic acids in kidney proximal tubules. The sequence is that of N-acyl-aromatic-L-amino acid amidohydrolase (carboxylate-forming) A (acy3.1) from Danio rerio (Zebrafish).